A 604-amino-acid polypeptide reads, in one-letter code: MRVVAAILYINVVVALICGLGIQGGALDLQDYPSVSFQGDAMQLQDYPSITFNLKGATWQTYRDFIEKLREIVTRGATTIAGTSIPVLNRVVPDSRRFVYVRLINLDGNVVTIAVDVTSLYVVAFSANNNGYFFSDSTETERTNLFVGIPRGDPLGFTGNYNSLENWAGADRGSIPLGPALLNKAIRNLRSNGRDSKAAKSLIVVIQMVSEAARFRRIEEQVRRSIADQDTFTPGSLMITMEKKWSKMSQQVERSVNDQGIFTGIFTRTVQLIDDNLQTLNIDNFNALSLHTMLAILLFRCRTTTSSHNTLPAASNIVLMGEDYVDKDDEKCTVGEPTRRISGRAGWCVDVKDGRDNDGNPIQVLSCGDGQERKQQWTFHRDGTIRSKLGKCMTAYGFKHGEYVMIYDCDTAIAGANKWVVSIDGTITNPISGLVLTAPRGATGTTLLVEKNVHAARQCWRVGDDVEPIVTKIVGFQEKCLEANYLENTNVSRYTKVFLDDCVLDRQQQRWALYSDGTIRADSDRSLRVTADGHRSLDSIIILACKGWGNQRWVFNTDGTILNPNAKLVMDVKDSDVSLLQIILHQSTGKPNQKWLTVTLPRTS.

The first 43 residues, Met-1–Gln-43, serve as a signal peptide directing secretion. Glu-211 is a catalytic residue. 3 disulfide bridges follow: Cys-301-Cys-332, Cys-348-Cys-367, and Cys-392-Cys-409. 2 consecutive Ricin B-type lectin domains span residues Gly-335–Gly-463 and Val-466–Val-598. The 1-alpha repeat unit spans residues Ala-345–Ser-387. The stretch at Leu-389–Asn-429 is one 1-beta repeat. The 1-gamma repeat unit spans residues Ser-432–Asp-465. The 2-alpha repeat unit spans residues Gln-477–Ala-521. Residues Cys-480 and Cys-502 are joined by a disulfide bond. The N-linked (GlcNAc...) asparagine glycan is linked to Asn-490. The stretch at Arg-525–Asn-563 is one 2-beta repeat. A 2-gamma repeat occupies Ala-566 to Thr-599.

It belongs to the ribosome-inactivating protein family. Type 2 RIP subfamily. In terms of assembly, disulfide-linked dimer of A and B chains. In terms of processing, the precursor is processed in two chains, A and B, that are linked by a disulfide bond. Post-translationally, glycosylated. The N-terminus is blocked. Expressed in rhizome and abundantly in leaves (at protein level).

It carries out the reaction Endohydrolysis of the N-glycosidic bond at one specific adenosine on the 28S rRNA.. Its activity is regulated as follows. Strongly inhibited by asialofetuin and asialomucin. In terms of biological role, gal/GalNAc-specific agglutinin. Behaves as a type-2 ribosome-inactivating protein. Inhibits mammalian ribosomes. The A chain is responsible for inhibiting protein synthesis through the catalytic inactivation of 60S ribosomal subunits by removing adenine from position 4,324 of 28S rRNA. The B chain binds to cell receptors and probably facilitates the entry into the cell of the A chain; B chains are also responsible for cell agglutination (lectin activity). Involved in plant defense against insects. Has very low cytotoxic activity against the human tumor cell line Molt4, but higher against CEM. The protein is Ribosome-inactivating protein PMRIPm of Polygonatum multiflorum (Solomon's seal).